We begin with the raw amino-acid sequence, 904 residues long: Alanine--tRNA ligase (904 aa).

Zn(2+)-binding residues include histidine 584, histidine 588, cysteine 687, and histidine 691.

It belongs to the class-II aminoacyl-tRNA synthetase family. Requires Zn(2+) as cofactor.

It localises to the cytoplasm. It carries out the reaction tRNA(Ala) + L-alanine + ATP = L-alanyl-tRNA(Ala) + AMP + diphosphate. Functionally, catalyzes the attachment of alanine to tRNA(Ala) in a two-step reaction: alanine is first activated by ATP to form Ala-AMP and then transferred to the acceptor end of tRNA(Ala). Also edits incorrectly charged Ser-tRNA(Ala) and Gly-tRNA(Ala) via its editing domain. The sequence is that of Alanine--tRNA ligase from Mycobacterium tuberculosis (strain ATCC 25177 / H37Ra).